The chain runs to 817 residues: Coiled-coil domain-containing protein 175 (817 aa).

Coiled-coil stretches lie at residues 130 to 166 (ILEI…ALGI) and 217 to 594 (LQDA…KQEE). Positions 761-817 (EEESPSSLSKEDLQKAGMKQKEEKTLRFSPSLHTRRDTLSRNCKMIKKRSRSPKNKP) are disordered. A compositionally biased stretch (basic and acidic residues) spans 769–786 (SKEDLQKAGMKQKEEKTL). Positions 804-817 (KMIKKRSRSPKNKP) are enriched in basic residues.

This Rattus norvegicus (Rat) protein is Coiled-coil domain-containing protein 175 (Ccdc175).